The primary structure comprises 115 residues: Large ribosomal subunit protein bL20 (115 aa).

This sequence belongs to the bacterial ribosomal protein bL20 family.

Functionally, binds directly to 23S ribosomal RNA and is necessary for the in vitro assembly process of the 50S ribosomal subunit. It is not involved in the protein synthesizing functions of that subunit. This chain is Large ribosomal subunit protein bL20, found in Synechococcus sp. (strain WH7803).